The sequence spans 695 residues: Rho-related BTB domain-containing protein 1 (695 aa).

The segment at 1–210 (MDSDMDYERP…DNAIRAALIS (210 aa)) is rho-like. Residues 21–28 (GDNAVGKT), 84–88 (DTFGD), and 140–143 (CQLD) each bind GTP. BTB domains lie at 266 to 426 (ADVL…DEKE) and 484 to 551 (SDVT…SPNL). The segment at 325–351 (SLGSAEEGKEGPQRTPQADPGASSGQD) is disordered.

It belongs to the small GTPase superfamily. Rho family. Highest expression in heart and testis.

The sequence is that of Rho-related BTB domain-containing protein 1 (Rhobtb1) from Mus musculus (Mouse).